The primary structure comprises 160 residues: SsrA-binding protein (160 aa).

The interval lysine 133–arginine 160 is disordered.

Belongs to the SmpB family.

It is found in the cytoplasm. In terms of biological role, required for rescue of stalled ribosomes mediated by trans-translation. Binds to transfer-messenger RNA (tmRNA), required for stable association of tmRNA with ribosomes. tmRNA and SmpB together mimic tRNA shape, replacing the anticodon stem-loop with SmpB. tmRNA is encoded by the ssrA gene; the 2 termini fold to resemble tRNA(Ala) and it encodes a 'tag peptide', a short internal open reading frame. During trans-translation Ala-aminoacylated tmRNA acts like a tRNA, entering the A-site of stalled ribosomes, displacing the stalled mRNA. The ribosome then switches to translate the ORF on the tmRNA; the nascent peptide is terminated with the 'tag peptide' encoded by the tmRNA and targeted for degradation. The ribosome is freed to recommence translation, which seems to be the essential function of trans-translation. This is SsrA-binding protein from Tolumonas auensis (strain DSM 9187 / NBRC 110442 / TA 4).